The primary structure comprises 185 residues: Ribosome-recycling factor (185 aa).

It belongs to the RRF family.

Its subcellular location is the cytoplasm. Its function is as follows. Responsible for the release of ribosomes from messenger RNA at the termination of protein biosynthesis. May increase the efficiency of translation by recycling ribosomes from one round of translation to another. The polypeptide is Ribosome-recycling factor (Pseudomonas entomophila (strain L48)).